A 1687-amino-acid chain; its full sequence is Protein TOPAZ1 (1687 aa).

Disordered stretches follow at residues 1–131 (MRRP…QPGF), 319–339 (EESS…KADE), 596–632 (LSRS…GNLT), and 880–916 (TSEV…SDDL). The span at 31–41 (GAAGGCGPEAG) shows a compositional bias: gly residues. The span at 80-113 (RRVEGRRGQVSPSDRRGLEAAKEAEFPLQTERHT) shows a compositional bias: basic and acidic residues. A compositionally biased stretch (polar residues) spans 598 to 622 (RSGSEVISNTTEDTQLTSDTQSLTG). Residues 897-916 (QSTDSKYVETPVKKEPSDDL) are compositionally biased toward basic and acidic residues.

It is found in the cytoplasm. The protein localises to the cytosol. Functionally, important for normal spermatogenesis and male fertility. Specifically required for progression to the post-meiotic stages of spermatocyte development. Seems to be necessary for normal expression levels of a number of testis-expressed gene transcripts, although its role in this process is unclear. The chain is Protein TOPAZ1 (TOPAZ1) from Macaca fascicularis (Crab-eating macaque).